We begin with the raw amino-acid sequence, 232 residues long: TIR domain-containing adapter molecule 2 (232 aa).

Basic and acidic residues predominate over residues 1 to 39; the sequence is MGVGKSKLDKCPLSWHKKDSVDADQDGHESDSKNSEEAC. The interval 1–70 is disordered; sequence MGVGKSKLDK…EAKGAGPEEQ (70 aa). Glycine 2 carries N-myristoyl glycine lipidation. The 153-residue stretch at 74 to 226 folds into the TIR domain; it reads EFLKFVILHA…SIWKETRSVS (153 aa). Tyrosine 164 carries the post-translational modification Phosphotyrosine.

As to quaternary structure, homodimer. Interacts with TLR4, TICAM1, IRF3 and IRF7 in response to LPS. Interacts with IL1R1, IL1RAP, IRAK2, IRAK3 and TRAF6. Interacts with protein kinase-inactive mutants of IRAK1 and IRAK4. Isoform 1 interacts with isoform 2; the interaction occurs in late endosomes and disrupts the interaction between isoform 1 and TICAM1. Interacts with MYD88; the interaction decreases after IL-18 stimulation in a time-dependent manner. Interacts with IL18R1 and IL18RAP. Interacts with TLR2. Interacts with RAB11FIP2. In terms of processing, myristoylated. Required for membrane association which is critical for its ability to initiate efficient signaling. Phosphorylated by PRKCE in response to LPS. Phosphorylation is essential for its function. It is depleted from the membrane upon phosphorylation. Tyrosine phosphorylation is inhibited by phosphatase PTPN4.

The protein resides in the cytoplasm. It is found in the golgi apparatus. It localises to the cell membrane. Its subcellular location is the early endosome. The protein localises to the late endosome. The protein resides in the endoplasmic reticulum. It is found in the cell projection. It localises to the phagocytic cup. Functionally, functions as a sorting adapter in different signaling pathways to facilitate downstream signaling leading to type I interferon induction. In TLR4 signaling, physically bridges TLR4 and TICAM1 and functionally transmits signal to TICAM1 in early endosomes after endocytosis of TLR4. In TLR2 signaling, physically bridges TLR2 and MYD88 and is required for the TLR2-dependent movement of MYD88 to endosomes following ligand engagement. Involved in IL-18 signaling and is proposed to function as a sorting adapter for MYD88 in IL-18 signaling during adaptive immune response. Forms a complex with RAB11FIP2 that is recruited to the phagosomes to promote the activation of the actin-regulatory GTPases RAC1 and CDC42 and subsequent phagocytosis of Gram-negative bacteria. The sequence is that of TIR domain-containing adapter molecule 2 (Ticam2) from Mus musculus (Mouse).